The chain runs to 166 residues: Interferon gamma (166 aa).

The N-terminal stretch at 1–23 is a signal peptide; that stretch reads MKYTSYILAFQLCIVLGSLGCYC. Glutamine 24 is modified (pyrrolidone carboxylic acid). Asparagine 48 is a glycosylation site (N-linked (GlcNAc...) asparagine). A glycan (N-linked (GlcNAc...) asparagine; in dimeric form) is linked at asparagine 120. Residues 147-166 form a disordered region; the sequence is AKTGKRKRSQMLFRGRRASQ. The span at 149 to 166 shows a compositional bias: basic residues; sequence TGKRKRSQMLFRGRRASQ. Positions 162–166 are excised as a propeptide; it reads RRASQ.

This sequence belongs to the type II (or gamma) interferon family. In terms of assembly, homodimer. Interacts with IFNGR1 (via extracellular domain); this interaction promotes IFNGR1 dimerization. Post-translationally, proteolytic processing produces C-terminal heterogeneity, with proteins ending alternatively at Gly-150, Met-157 or Gly-161. Released primarily from activated T lymphocytes.

The protein resides in the secreted. In terms of biological role, type II interferon produced by immune cells such as T-cells and NK cells that plays crucial roles in antimicrobial, antiviral, and antitumor responses by activating effector immune cells and enhancing antigen presentation. Primarily signals through the JAK-STAT pathway after interaction with its receptor IFNGR1 to affect gene regulation. Upon IFNG binding, IFNGR1 intracellular domain opens out to allow association of downstream signaling components JAK2, JAK1 and STAT1, leading to STAT1 activation, nuclear translocation and transcription of IFNG-regulated genes. Many of the induced genes are transcription factors such as IRF1 that are able to further drive regulation of a next wave of transcription. Plays a role in class I antigen presentation pathway by inducing a replacement of catalytic proteasome subunits with immunoproteasome subunits. In turn, increases the quantity, quality, and repertoire of peptides for class I MHC loading. Increases the efficiency of peptide generation also by inducing the expression of activator PA28 that associates with the proteasome and alters its proteolytic cleavage preference. Up-regulates as well MHC II complexes on the cell surface by promoting expression of several key molecules such as cathepsins B/CTSB, H/CTSH, and L/CTSL. Participates in the regulation of hematopoietic stem cells during development and under homeostatic conditions by affecting their development, quiescence, and differentiation. This chain is Interferon gamma (IFNG), found in Homo sapiens (Human).